The following is a 213-amino-acid chain: Gas vesicle protein F1 (213 aa).

The protein belongs to the gas vesicle GvpF/GvpL family. Binds GvpA1 in early growth stages; is the only one of GvpF1 to GvpM1 that interacts with GvpA1 in H.volcanii experiments. GvpF to GvpM interact with each other in vitro, and may form multi-subunit complex(es). Interacts with GvpC1 and GvpO1.

Its subcellular location is the gas vesicle. It is found in the cytoplasm. Functionally, might be involved in preventing aggregation of GvpA1. Proteins GvpF to GvpM might be involved in nucleating gas vesicle formation. A minor component of the gas vesicle, also found in soluble extracts. Gas vesicles are hollow, gas filled proteinaceous nanostructures found in several microbial planktonic microorganisms. They allow positioning of halobacteria at the optimal depth for growth in the poorly aerated, shallow brine pools of their habitat. Expression of a 9.5 kb p-vac DNA fragment containing 2 divergently transcribed regions (gvpD-gvpE-gvpF-gvpG-gvpH-gvpI-gvpJ-gvpK-gvpL-gvpM and gvpA-gvpC-gvpN-gvpO) allows H.volcanii to produce gas vesicles. A minimal gas vesicle can be made in H.volcanii by gvpA1-gvpO1 plus gvpF1-gvpG1-gvpJ1-gvpK1-gvpL1-gvpM1; lack of enough GvpJ1 prevents formation. The same region restores gas vesicle production in H.halobium without the p-vac locus. This chain is Gas vesicle protein F1 (gvpF11), found in Halobacterium salinarum (strain ATCC 700922 / JCM 11081 / NRC-1) (Halobacterium halobium).